Reading from the N-terminus, the 283-residue chain is N-terminal Xaa-Pro-Lys N-methyltransferase 2 (283 aa).

S-adenosyl-L-methionine contacts are provided by residues G124, R129, D146, L174 to Q175, and Q190.

Belongs to the methyltransferase superfamily. NTM1 family.

Its subcellular location is the nucleus. The enzyme catalyses N-terminal L-alanyl-L-prolyl-L-lysyl-[protein] + S-adenosyl-L-methionine = N-terminal N-methyl-L-alanyl-L-prolyl-L-lysyl-[protein] + S-adenosyl-L-homocysteine + H(+). The catalysed reaction is N-terminal L-prolyl-L-prolyl-L-lysyl-[protein] + S-adenosyl-L-methionine = N-terminal N-methyl-L-prolyl-L-prolyl-L-lysyl-[protein] + S-adenosyl-L-homocysteine + H(+). It catalyses the reaction N-terminal L-seryl-L-prolyl-L-lysyl-[protein] + S-adenosyl-L-methionine = N-terminal N-methyl-L-seryl-L-prolyl-L-lysyl-[protein] + S-adenosyl-L-homocysteine + H(+). Functionally, alpha N-methyltransferase that methylates the N-terminus of target proteins containing the N-terminal motif [Ala/Pro/Ser]-Pro-Lys when the initiator Met is cleaved. Specifically catalyzes monomethylation of exposed alpha-amino group of Ala or Ser residue in the [Ala/Ser]-Pro-Lys motif and Pro in the Pro-Pro-Lys motif. Predominantly functions as a mono-methyltransferase but is also able to di-/tri-methylate the GPKRIA peptide and di-methylate the PPKRIA peptide (in vitro). May activate NTMT1 by priming its substrates for trimethylation. This Rattus norvegicus (Rat) protein is N-terminal Xaa-Pro-Lys N-methyltransferase 2 (Ntmt2).